A 108-amino-acid polypeptide reads, in one-letter code: MIPGEIITPSGAIEINVGRDTLRISVANTGDRPIQVGSHYHFYEVNQALEFQRELTKGTHLNIPAGTSVRFEPGDTKEVELVTIAGTEEIYGFNGLINGSLKGKKKKK.

It belongs to the urease beta subunit family. As to quaternary structure, heterotrimer of UreA (gamma), UreB (beta) and UreC (alpha) subunits. Three heterotrimers associate to form the active enzyme.

The protein localises to the cytoplasm. The catalysed reaction is urea + 2 H2O + H(+) = hydrogencarbonate + 2 NH4(+). It functions in the pathway nitrogen metabolism; urea degradation; CO(2) and NH(3) from urea (urease route): step 1/1. The polypeptide is Urease subunit beta (Microcystis aeruginosa (strain NIES-843 / IAM M-2473)).